Here is a 313-residue protein sequence, read N- to C-terminus: Malate dehydrogenase (313 aa).

NAD(+) is bound by residues 8–13 (GAGNVG) and D33. Substrate contacts are provided by R83 and R89. NAD(+) contacts are provided by residues N96 and 119 to 121 (ISN). Substrate contacts are provided by N121 and R152. The active-site Proton acceptor is H176.

The protein belongs to the LDH/MDH superfamily. MDH type 3 family.

It carries out the reaction (S)-malate + NAD(+) = oxaloacetate + NADH + H(+). Catalyzes the reversible oxidation of malate to oxaloacetate. The sequence is that of Malate dehydrogenase from Parabacteroides distasonis (strain ATCC 8503 / DSM 20701 / CIP 104284 / JCM 5825 / NCTC 11152).